Here is a 361-residue protein sequence, read N- to C-terminus: Phospho-N-acetylmuramoyl-pentapeptide-transferase (361 aa).

10 helical membrane-spanning segments follow: residues 18–38 (VFNY…ILVL), 73–93 (TMGG…WGDL), 97–117 (FIWV…MDDY), 135–155 (LLQS…ATTG), 168–188 (VLPN…VGSS), 196–216 (GLDG…GVFA), 235–255 (GAGE…GFLW), 263–283 (VFMG…TAVV), 288–308 (LVYF…ILQV), and 338–358 (KVIV…LATL).

The protein belongs to the glycosyltransferase 4 family. MraY subfamily. It depends on Mg(2+) as a cofactor.

The protein resides in the cell inner membrane. The catalysed reaction is UDP-N-acetyl-alpha-D-muramoyl-L-alanyl-gamma-D-glutamyl-meso-2,6-diaminopimeloyl-D-alanyl-D-alanine + di-trans,octa-cis-undecaprenyl phosphate = di-trans,octa-cis-undecaprenyl diphospho-N-acetyl-alpha-D-muramoyl-L-alanyl-D-glutamyl-meso-2,6-diaminopimeloyl-D-alanyl-D-alanine + UMP. The protein operates within cell wall biogenesis; peptidoglycan biosynthesis. Its function is as follows. Catalyzes the initial step of the lipid cycle reactions in the biosynthesis of the cell wall peptidoglycan: transfers peptidoglycan precursor phospho-MurNAc-pentapeptide from UDP-MurNAc-pentapeptide onto the lipid carrier undecaprenyl phosphate, yielding undecaprenyl-pyrophosphoryl-MurNAc-pentapeptide, known as lipid I. The chain is Phospho-N-acetylmuramoyl-pentapeptide-transferase from Coxiella burnetii (strain CbuK_Q154) (Coxiella burnetii (strain Q154)).